Consider the following 405-residue polypeptide: Indoleamine 2,3-dioxygenase acdA (405 aa).

His-312 provides a ligand contact to heme.

It belongs to the indoleamine 2,3-dioxygenase family. Requires heme as cofactor.

It carries out the reaction L-tryptophan + O2 = N-formyl-L-kynurenine. The protein operates within secondary metabolite biosynthesis. Its function is as follows. Indoleamine 2,3-dioxygenase; part of the gene cluster that mediates the biosynthesis of aspcandine, a pyrrolobenzazepine alkaloid. Initially, the indoleamine 2,3-dioxygenase acdA accepts L-tryptophan and performs the oxidative opening of the indole ring to yield N'-formyl-L-kynurenine, which undergoes the spontaneous deformylation reaction to provide L-kynurenine. The kynurenine 3-monooxygenase acdD then hydroxylates L-kynurenine to afford 3-hydroxy-L-kynurenine. 3-hydroxy-L-kynurenine is activated by the A domain of the NRPS-PKS acdB and subsequently loaded onto the enzyme. The KS domain conducts the decarboxylative condensation of the 3-hydroxy-L-kynurenyl and malonyl moieties, and subsequent nucleophilic attacks by the two amino groups would occur nonenzymatically at two distinct positions, achieving the chain release and the construction of the tricyclic system. Finally, a dehydration reaction completes the biosynthesis to yield aspcandine. In Aspergillus candidus, this protein is Indoleamine 2,3-dioxygenase acdA.